We begin with the raw amino-acid sequence, 157 residues long: Snaclec A16 (157 aa).

Residues 1 to 23 form the signal peptide; that stretch reads MGRLISVSFGLLVVFLSLSGTGA. 3 disulfide bridges follow: Cys-27-Cys-38, Cys-55-Cys-149, and Cys-124-Cys-141. The C-type lectin domain occupies 34–150; it reads YEGHCYKVFN…CELAYHFICM (117 aa).

This sequence belongs to the snaclec family. Heterodimer; disulfide-linked. In terms of tissue distribution, expressed by the venom gland.

It localises to the secreted. Interferes with one step of hemostasis (modulation of platelet aggregation, or coagulation cascade, for example). In Macrovipera lebetinus (Levantine viper), this protein is Snaclec A16.